The chain runs to 182 residues: ATP synthase subunit b, chloroplastic (182 aa).

Residues 29-47 traverse the membrane as a helical segment; it reads IINLALLIVLVINVAKDVL.

Belongs to the ATPase B chain family. As to quaternary structure, F-type ATPases have 2 components, F(1) - the catalytic core - and F(0) - the membrane proton channel. F(1) has five subunits: alpha(3), beta(3), gamma(1), delta(1), epsilon(1). F(0) has four main subunits: a(1), b(1), b'(1) and c(10-14). The alpha and beta chains form an alternating ring which encloses part of the gamma chain. F(1) is attached to F(0) by a central stalk formed by the gamma and epsilon chains, while a peripheral stalk is formed by the delta, b and b' chains.

Its subcellular location is the plastid. It is found in the chloroplast thylakoid membrane. Its function is as follows. F(1)F(0) ATP synthase produces ATP from ADP in the presence of a proton or sodium gradient. F-type ATPases consist of two structural domains, F(1) containing the extramembraneous catalytic core and F(0) containing the membrane proton channel, linked together by a central stalk and a peripheral stalk. During catalysis, ATP synthesis in the catalytic domain of F(1) is coupled via a rotary mechanism of the central stalk subunits to proton translocation. In terms of biological role, component of the F(0) channel, it forms part of the peripheral stalk, linking F(1) to F(0). The chain is ATP synthase subunit b, chloroplastic from Heterosigma akashiwo (strain NIES-293 / 8280G21-1).